The following is a 177-amino-acid chain: ATP synthase subunit delta (177 aa).

This sequence belongs to the ATPase delta chain family. As to quaternary structure, F-type ATPases have 2 components, F(1) - the catalytic core - and F(0) - the membrane proton channel. F(1) has five subunits: alpha(3), beta(3), gamma(1), delta(1), epsilon(1). F(0) has three main subunits: a(1), b(2) and c(10-14). The alpha and beta chains form an alternating ring which encloses part of the gamma chain. F(1) is attached to F(0) by a central stalk formed by the gamma and epsilon chains, while a peripheral stalk is formed by the delta and b chains.

It localises to the cell inner membrane. Functionally, f(1)F(0) ATP synthase produces ATP from ADP in the presence of a proton or sodium gradient. F-type ATPases consist of two structural domains, F(1) containing the extramembraneous catalytic core and F(0) containing the membrane proton channel, linked together by a central stalk and a peripheral stalk. During catalysis, ATP synthesis in the catalytic domain of F(1) is coupled via a rotary mechanism of the central stalk subunits to proton translocation. Its function is as follows. This protein is part of the stalk that links CF(0) to CF(1). It either transmits conformational changes from CF(0) to CF(1) or is implicated in proton conduction. This is ATP synthase subunit delta from Yersinia pseudotuberculosis serotype O:1b (strain IP 31758).